We begin with the raw amino-acid sequence, 198 residues long: Peptide methionine sulfoxide reductase MsrA 2 (198 aa).

C32 is an active-site residue.

The protein belongs to the MsrA Met sulfoxide reductase family.

It carries out the reaction L-methionyl-[protein] + [thioredoxin]-disulfide + H2O = L-methionyl-(S)-S-oxide-[protein] + [thioredoxin]-dithiol. The catalysed reaction is [thioredoxin]-disulfide + L-methionine + H2O = L-methionine (S)-S-oxide + [thioredoxin]-dithiol. Functionally, has an important function as a repair enzyme for proteins that have been inactivated by oxidation. Catalyzes the reversible oxidation-reduction of methionine sulfoxide in proteins to methionine. This Rhizobium meliloti (strain 1021) (Ensifer meliloti) protein is Peptide methionine sulfoxide reductase MsrA 2 (msrA2).